A 300-amino-acid chain; its full sequence is Protoheme IX farnesyltransferase 1 (300 aa).

8 helical membrane passes run 28–48 (VVAL…PGAV), 50–70 (VQPL…AAAY), 106–126 (AMAI…TAWL), 150–170 (IVVG…AITG), 176–196 (ALLL…ALAI), 222–242 (CIML…LVGM), 243–263 (CGPL…YKAW), and 280–300 (FSIY…YLWS).

This sequence belongs to the UbiA prenyltransferase family. Protoheme IX farnesyltransferase subfamily.

It is found in the cell inner membrane. The enzyme catalyses heme b + (2E,6E)-farnesyl diphosphate + H2O = Fe(II)-heme o + diphosphate. Its pathway is porphyrin-containing compound metabolism; heme O biosynthesis; heme O from protoheme: step 1/1. Its function is as follows. Converts heme B (protoheme IX) to heme O by substitution of the vinyl group on carbon 2 of heme B porphyrin ring with a hydroxyethyl farnesyl side group. This Shewanella loihica (strain ATCC BAA-1088 / PV-4) protein is Protoheme IX farnesyltransferase 1.